The chain runs to 394 residues: MTVKVLVVDDSSFFRRRVSEIINADPRLEVIGNAVNGKEAVELVKKLQPDVITMDIEMPVMDGITAVREIMKVLPTPILMFSSLTQEGAKATLDALDAGALDFLPKKFEDIARNRDEAISLLQKRVGELARKRMFMRRPLRTTPAVAPASRYSAPVNAALTREAALTTAARTTAARVTPTSTTRQTMHSAVAAKPMARFKASGKKYQLMAIGTSTGGPVALQKILTQLPANFPYPIVLVQHMPATFTAAFAARLNNLSKISVKEAEDGDTLRAGVAYLAPGGKQMMLEGRPGSARLRILDGGDRMNYKPCVDVTFGSAAKVYNDKVLSMILTGMGADGREGARMLKTHGSTVWAQDEESCVVYGMPQAVAKAGISTEDLPLERFAERILVEVGR.

Residues 4–121 (KVLVVDDSSF…ARNRDEAISL (118 aa)) enclose the Response regulatory domain. The residue at position 55 (aspartate 55) is a 4-aspartylphosphate. In terms of domain architecture, CheB-type methylesterase spans 202–394 (SGKKYQLMAI…AERILVEVGR (193 aa)). Catalysis depends on residues serine 214, histidine 241, and aspartate 337.

It belongs to the CheB family. In terms of processing, phosphorylated by CheA. Phosphorylation of the N-terminal regulatory domain activates the methylesterase activity.

It is found in the cytoplasm. It catalyses the reaction [protein]-L-glutamate 5-O-methyl ester + H2O = L-glutamyl-[protein] + methanol + H(+). The catalysed reaction is L-glutaminyl-[protein] + H2O = L-glutamyl-[protein] + NH4(+). In terms of biological role, involved in chemotaxis. Part of a chemotaxis signal transduction system that modulates chemotaxis in response to various stimuli. Catalyzes the demethylation of specific methylglutamate residues introduced into the chemoreceptors (methyl-accepting chemotaxis proteins or MCP) by CheR. Also mediates the irreversible deamidation of specific glutamine residues to glutamic acid. This Photobacterium profundum (strain SS9) protein is Protein-glutamate methylesterase/protein-glutamine glutaminase 2.